A 283-amino-acid chain; its full sequence is MMTHWPSPAKLNLFLYITGQRADGYHTLQTLFQFLDYGDTLHIEPRRDGEIHLLTPVTGVENEDNLIVRAARLLMKVASESGRLPAGSGADISIEKRLPMGGGLGGGSSNAATVLVALNHLWQCGLSIDELATLGLTLGADVPVFVRGHAAFAEGVGEILTPVNPPEKWYLVAHPGVSIPTPVIFKDPQLPRNTPKRSIDTLLKCEFSNDCEVIARKRFREVDAALSWLLEYAPSRLTGTGACVFAEFDTESCARQVLEQAPEWLNAFVAKGVNLSPLHRELL.

Residue lysine 10 is part of the active site. 99–109 (PMGGGLGGGSS) serves as a coordination point for ATP. Residue aspartate 141 is part of the active site.

This sequence belongs to the GHMP kinase family. IspE subfamily. Homodimer.

It carries out the reaction 4-CDP-2-C-methyl-D-erythritol + ATP = 4-CDP-2-C-methyl-D-erythritol 2-phosphate + ADP + H(+). The protein operates within isoprenoid biosynthesis; isopentenyl diphosphate biosynthesis via DXP pathway; isopentenyl diphosphate from 1-deoxy-D-xylulose 5-phosphate: step 3/6. Functionally, catalyzes the phosphorylation of the position 2 hydroxy group of 4-diphosphocytidyl-2C-methyl-D-erythritol. The polypeptide is 4-diphosphocytidyl-2-C-methyl-D-erythritol kinase (Salmonella enteritidis PT4 (strain P125109)).